The sequence spans 36 residues: Pancreatic polypeptide (36 aa).

The residue at position 36 (Y36) is a Tyrosine amide.

Belongs to the NPY family.

It is found in the secreted. In terms of biological role, hormone secreted by pancreatic cells that acts as a regulator of pancreatic and gastrointestinal functions. The chain is Pancreatic polypeptide (PPY) from Larus argentatus (Herring gull).